A 318-amino-acid chain; its full sequence is MTLANATHTSAIDIARFGKVAVMFGGRSAEREVSLRSGQAVLSALISAGVNAHGFDPAESELHQLVEQKFDRVLIMLHGRGGEDGSLQGALQQMNMPYTGTGVLGSALCMDKIRSKQVWQSLGLPTANYEIADKRDFNAANCSDIMSRLGDLVMVKPAQEGSSIGMAKVSNAQQLAAAIQQAFEYDDKVLLEQFIQGSEYTVSLLNGEAMPSISMSTPRDFYDYEAKYQSNTTEYFCPSGLPAEQEGLLARLALDAFDAVAGSGWGRVDFMQDMLGQFYLLEANTVPGMTEKSLVPLAAKQAGLSFEQLSLAVLATAG.

One can recognise an ATP-grasp domain in the interval 116–315; it reads KQVWQSLGLP…FEQLSLAVLA (200 aa). 146 to 201 serves as a coordination point for ATP; it reads MSRLGDLVMVKPAQEGSSIGMAKVSNAQQLAAAIQQAFEYDDKVLLEQFIQGSEYT. Mg(2+) contacts are provided by D269, E282, and N284.

This sequence belongs to the D-alanine--D-alanine ligase family. Mg(2+) is required as a cofactor. Mn(2+) serves as cofactor.

The protein resides in the cytoplasm. It catalyses the reaction 2 D-alanine + ATP = D-alanyl-D-alanine + ADP + phosphate + H(+). The protein operates within cell wall biogenesis; peptidoglycan biosynthesis. Functionally, cell wall formation. The protein is D-alanine--D-alanine ligase of Pseudoalteromonas atlantica (strain T6c / ATCC BAA-1087).